Consider the following 70-residue polypeptide: Phycocyanin-645 alpha-2 chain (70 aa).

Arg-16 provides a ligand contact to (2R,3E)-phycocyanobilin. 3 residues coordinate mesobiliverdin: Cys-18, Tyr-26, and Lys-41.

This sequence belongs to the phycoerythrin family. As to quaternary structure, heterotetramer of 2 different alpha chains and 2 identical beta chains which form 2 alpha-beta heterodimers within the heterotetramer. Post-translationally, contains one phycocyanobilin chromophore, one mesobiliverdin chromophore and one 15,16-dihydrobiliverdin chromophore with binding mediated by both the alpha and beta subunits.

It localises to the plastid. The protein localises to the chloroplast thylakoid membrane. Light-harvesting photosynthetic tetrapyrrole chromophore-protein from the phycobiliprotein complex. This chain is Phycocyanin-645 alpha-2 chain, found in Chroomonas sp.